The primary structure comprises 307 residues: uncharacterized protein (307 aa).

An ABC transporter domain is found at 5 to 233; sequence VQTNGLTKTY…NTEYIELVTP (229 aa). 37-44 contacts ATP; that stretch reads GPNGAGKT.

It belongs to the ABC transporter superfamily.

This is an uncharacterized protein from Bacillus subtilis (strain 168).